Here is a 123-residue protein sequence, read N- to C-terminus: Plasminogen (123 aa).

The 79-residue stretch at 40–118 folds into the Kringle domain; it reads DCYHGNGQSY…RWEFCNLKKC (79 aa). Cystine bridges form between cysteine 41–cysteine 118, cysteine 62–cysteine 101, and cysteine 90–cysteine 113.

This sequence belongs to the peptidase S1 family. Plasminogen subfamily. In terms of assembly, interacts with CSPG4 and AMOT. Interacts (via the Kringle domains) with HRG; the interaction tethers PLG to the cell surface and enhances its activation. Interacts (via Kringle 4 domain) with ADA; the interaction stimulates PLG activation when in complex with DPP4. Angiostatin: Interacts with ATP5F1A; the interaction inhibits most of the angiogenic effects of angiostatin.

The protein localises to the secreted. It catalyses the reaction Preferential cleavage: Lys-|-Xaa &gt; Arg-|-Xaa, higher selectivity than trypsin. Converts fibrin into soluble products.. Converted into plasmin by plasminogen activators, both plasminogen and its activator being bound to fibrin. Cannot be activated with streptokinase. In terms of biological role, plasmin dissolves the fibrin of blood clots and acts as a proteolytic factor in a variety of other processes including embryonic development, tissue remodeling, tumor invasion, and inflammation. In ovulation, weakens the walls of the Graafian follicle. It activates the urokinase-type plasminogen activator, collagenases and several complement zymogens, such as C1, C4 and C5. Cleavage of fibronectin and laminin leads to cell detachment and apoptosis. Also cleaves fibrin, thrombospondin and von Willebrand factor. Its role in tissue remodeling and tumor invasion may be modulated by CSPG4. Binds to cells. In Capra hircus (Goat), this protein is Plasminogen (PLG).